The following is a 255-amino-acid chain: Indole-3-glycerol phosphate synthase (255 aa).

It belongs to the TrpC family.

The enzyme catalyses 1-(2-carboxyphenylamino)-1-deoxy-D-ribulose 5-phosphate + H(+) = (1S,2R)-1-C-(indol-3-yl)glycerol 3-phosphate + CO2 + H2O. Its pathway is amino-acid biosynthesis; L-tryptophan biosynthesis; L-tryptophan from chorismate: step 4/5. This chain is Indole-3-glycerol phosphate synthase, found in Shouchella clausii (strain KSM-K16) (Alkalihalobacillus clausii).